A 3637-amino-acid chain; its full sequence is Replicase polyprotein 1ab (3637 aa).

A C4-type; atypical zinc finger spans residues C8–C28. A Peptidase C31 domain is found at E69–R181. Positions E69 to N183 are PCP1-alpha. Active-site for Nsp1-alpha papain-like cysteine proteinase activity residues include C76 and H147. The interval R262–Y380 is PCP1-beta. Residues R262 to G381 form the Peptidase C32 domain. Catalysis depends on for Nsp1-beta papain-like cysteine proteinase activity residues C269 and H340. The region spanning G381–G486 is the Peptidase C33 domain. Residues C390 and H456 each act as for Nsp2 cysteine proteinase activity in the active site. 2 disordered regions span residues C676–K743 and Q865–L899. Over residues P678 to R689 the composition is skewed to basic residues. Basic and acidic residues-rich tracts occupy residues D714–K727 and G873–L895. Transmembrane regions (helical) follow at residues W940–F960, V981–G1001, F1083–L1103, I1287–L1307, A1362–V1382, C1390–L1410, and V1423–I1443. The HD1 stretch occupies residues C979 to L1103. The tract at residues I1287–W1446 is HD2. The Peptidase S32 domain maps to G1511–E1712. Residues H1549, D1574, and S1626 each act as charge relay system; for 3C-like serine proteinase activity in the active site. Helical transmembrane passes span D1735–A1755, F1761–F1781, L1801–L1821, C1824–G1844, and E1853–K1873. An HD3 region spans residues D1735–F1872. In terms of domain architecture, NiRAN spans S2214–G2372. The region spanning G2611 to Y2745 is the RdRp catalytic domain. The AV ZBD domain occupies K2865–L2928. Residues C2871, C2874, C2884, C2889, H2892, H2894, H2896, H2898, C2905, H2907, C2914, and C2917 each contribute to the Zn(2+) site. Residues Q2985 to L3137 form the (+)RNA virus helicase ATP-binding domain. G3013–T3020 lines the ATP pocket. Residues I3138–E3269 form the (+)RNA virus helicase C-terminal domain. The 97-residue stretch at E3293 to V3389 folds into the AV-Nsp11N/CoV-Nsp15M domain. The NendoU domain occupies L3391–F3513. Catalysis depends on residues H3422, H3437, and K3466.

This sequence belongs to the arteriviridae polyprotein family. Specific enzymatic cleavages in vivo by its own proteases yield mature proteins. There are two alternative pathways for processing. Either nsp4-5 is cleaved, which represents the major pathway or the nsp5-6 and nsp6-7 are processed, which represents the minor pathway. The major pathway occurs when nsp2 acts as a cofactor for nsp4.

Its subcellular location is the host membrane. It localises to the host cytoplasm. It is found in the host perinuclear region. It catalyses the reaction RNA(n) + a ribonucleoside 5'-triphosphate = RNA(n+1) + diphosphate. The catalysed reaction is ATP + H2O = ADP + phosphate + H(+). It carries out the reaction uridylyl-uridylyl-ribonucleotide-RNA = a 3'-end uridylyl-2',3'-cyclophospho-uridine-RNA + a 5'-end dephospho-ribonucleoside-RNA. The replicase polyprotein 1ab is a multifunctional protein: it contains the activities necessary for the transcription of negative stranded RNA, leader RNA, subgenomic mRNAs and progeny virion RNA as well as proteinases responsible for the cleavage of the polyprotein into functional products. In terms of biological role, the Nsp1 chain is essential for viral subgenomic mRNA synthesis. Its function is as follows. The 3C-like serine proteinase chain is responsible for the majority of cleavages as it cleaves the C-terminus of the polyprotein. Functionally, the helicase chain, which contains a zinc finger structure, displays RNA and DNA duplex-unwinding activities with 5' to 3' polarity. Plays a role in viral transcription/replication and prevents the simultaneous activation of host cell dsRNA sensors, such as MDA5/IFIH1, OAS, and PKR. Acts by degrading the 5'-polyuridines generated during replication of the poly(A) region of viral genomic and subgenomic RNAs. Catalyzes a two-step reaction in which a 2'3'-cyclic phosphate (2'3'-cP) is first generated by 2'-O transesterification, which is then hydrolyzed to a 3'-phosphate (3'-P). If not degraded, poly(U) RNA would hybridize with poly(A) RNA tails and activate host dsRNA sensors. In Mus musculus domesticus (western European house mouse), this protein is Replicase polyprotein 1ab (rep).